Consider the following 282-residue polypeptide: NADPH-dependent 7-cyano-7-deazaguanine reductase (282 aa).

Substrate is bound at residue 88 to 90 (IES). Position 90–91 (90–91 (SK)) interacts with NADPH. The active-site Thioimide intermediate is Cys190. The active-site Proton donor is Asp197. 229–230 (HE) is a substrate binding site. 258-259 (RG) lines the NADPH pocket.

It belongs to the GTP cyclohydrolase I family. QueF type 2 subfamily. In terms of assembly, homodimer.

It is found in the cytoplasm. The catalysed reaction is 7-aminomethyl-7-carbaguanine + 2 NADP(+) = 7-cyano-7-deazaguanine + 2 NADPH + 3 H(+). It functions in the pathway tRNA modification; tRNA-queuosine biosynthesis. Its function is as follows. Catalyzes the NADPH-dependent reduction of 7-cyano-7-deazaguanine (preQ0) to 7-aminomethyl-7-deazaguanine (preQ1). This is NADPH-dependent 7-cyano-7-deazaguanine reductase from Escherichia coli O81 (strain ED1a).